We begin with the raw amino-acid sequence, 505 residues long: MSRNYNDELQFLEKISKNCWRIKKGFVPNMQVEGVFYVNDALEKLMFEELRNACRGGGVGGFLPAMKQIGNVAALPGIVHRSIGLPDVHSGYGFAIGNMAAFDMNDSEAVVSPGGVGFDINCGVRLLRTNLDESDVQPVKEQLAQAMFDHIPVGVGSKGVIPMNAKDLEEALEMGVDWSLREGYAWAEDKEHCEEYGRMLQADPNKVSARAKKRGLPQLGTLGAGNHYAEIQVVDEIFNEYAAKKMGIDHKGQVCVMIHSGSRGLGHQVATDALVAMEKAMKRDKIIVNDRQLACARIASPEGQDYLKGMAAAGNYAWVNRSSMTFLTRQAFAKVFNTTPDDLDLHVIYDVSHNIAKVEQHVVDGKERTLLVHRKGSTRAFPPHHPLIAVDYQLTGQPVLIGGTMGTCSYVLTGTEQGMTETFGTTCHGAGRALSRAKSRRNLDFQDVLDKLADMGIAIRVASPKLVMEEAPESYKNVTDVVNTCHDAGISKKAIKLRPIAVIKG.

4 residues coordinate Mn(2+): D119, C122, H227, and H259. 226 to 230 (NHYAE) is a binding site for GMP. S300 bears the Phosphoserine mark. A Mn(2+)-binding site is contributed by H353. GMP contacts are provided by residues 353–354 (HN), 402–405 (GGTM), S409, and 428–431 (HGAG). H428 (GMP-histidine intermediate) is an active-site residue. K496 is covalently cross-linked (Glycyl lysine isopeptide (Lys-Gly) (interchain with G-Cter in SUMO2)). K504 lines the GMP pocket.

The protein belongs to the RtcB family. In terms of assembly, catalytic component of the tRNA-splicing ligase complex. The cofactor is Mn(2+).

The protein localises to the nucleus. It is found in the cytoplasm. The enzyme catalyses a 3'-end 3'-phospho-ribonucleotide-RNA + a 5'-end dephospho-ribonucleoside-RNA + GTP = a ribonucleotidyl-ribonucleotide-RNA + GMP + diphosphate. The catalysed reaction is a 3'-end 2',3'-cyclophospho-ribonucleotide-RNA + a 5'-end dephospho-ribonucleoside-RNA + GTP + H2O = a ribonucleotidyl-ribonucleotide-RNA + GMP + diphosphate + H(+). Catalytic subunit of the tRNA-splicing ligase complex that acts by directly joining spliced tRNA halves to mature-sized tRNAs by incorporating the precursor-derived splice junction phosphate into the mature tRNA as a canonical 3',5'-phosphodiester. May act as an RNA ligase with broad substrate specificity, and may function toward other RNAs. This chain is RNA-splicing ligase RtcB homolog, found in Macaca fascicularis (Crab-eating macaque).